The chain runs to 430 residues: DD-carboxypeptidase/endopeptidase Mpg (430 aa).

Zn(2+) is bound by residues His-295, Asp-299, and His-375.

It belongs to the peptidase M23B family. Monomer. Zn(2+) is required as a cofactor. Likely to be synthesized as a proenzyme. The cleavage of the N-terminal domain is probably required for the activation of the enzyme.

It is found in the cell outer membrane. Functionally, has both endopeptidase and DD-carboxypeptidase activities. Degrades cell wall peptidoglycan (PG) to allow consummate expression of pili. In Neisseria meningitidis serogroup B (strain ATCC 13091 / M2091), this protein is DD-carboxypeptidase/endopeptidase Mpg.